Here is a 175-residue protein sequence, read N- to C-terminus: Chorismate pyruvate-lyase (175 aa).

Residues Met-36, Arg-78, Leu-116, and Glu-157 each coordinate substrate.

It belongs to the UbiC family. Monomer.

It is found in the cytoplasm. It carries out the reaction chorismate = 4-hydroxybenzoate + pyruvate. Its pathway is cofactor biosynthesis; ubiquinone biosynthesis. In terms of biological role, removes the pyruvyl group from chorismate, with concomitant aromatization of the ring, to provide 4-hydroxybenzoate (4HB) for the ubiquinone pathway. In Hamiltonella defensa subsp. Acyrthosiphon pisum (strain 5AT), this protein is Chorismate pyruvate-lyase.